Reading from the N-terminus, the 121-residue chain is uncharacterized protein (121 aa).

The segment at 85–111 (NANNDDYESPYKTPKIKSNPSLDSSGS) is disordered. A compositionally biased stretch (polar residues) spans 100-111 (IKSNPSLDSSGS).

This is an uncharacterized protein from Dictyostelium discoideum (Social amoeba).